The chain runs to 166 residues: Large ribosomal subunit protein uL11x (166 aa).

This sequence belongs to the universal ribosomal protein uL11 family.

Binds directly to 26S ribosomal RNA. The chain is Large ribosomal subunit protein uL11x (RPL12C) from Arabidopsis thaliana (Mouse-ear cress).